The following is a 365-amino-acid chain: Aminotransferase poxL (365 aa).

Residue Arg-92 coordinates pyridoxal 5'-phosphate. Residue Lys-193 is modified to N6-(pyridoxal phosphate)lysine. Glu-229 contributes to the pyridoxal 5'-phosphate binding site.

It belongs to the class-IV pyridoxal-phosphate-dependent aminotransferase family. The cofactor is pyridoxal 5'-phosphate.

It participates in secondary metabolite biosynthesis. Its function is as follows. Aminotransferase; part of the gene cluster that mediates the biosynthesis of oxaleimides, cytotoxic compounds containing an unusual disubstituted succinimide moiety. The first step of the pathway is provided by the HR-PKS poxF that serves in a new mode of collaborative biosynthesis with the PKS-NRPS poxE, by providing the olefin containing amino acid substrate via the synthesis of an ACP-bound dec-4-enoate. The cytochrome P450 monooxygenase poxM-catalyzed oxidation at the alpha-position creates the enzyme-bound 2-hydroxydec-4-enoyl-ACP thioester, which may be prone to spontaneous hydrolysis to yield 2-hydroxydec-4-enoic acid due to increased electrophilicity of the carbonyl. 2-hydroxydec-4-enoic acid can then be further oxidized by poxM to yield the alpha-ketoacid 2-oxodec-4-enoicacid, which is reductively aminated by the aminotransferase poxL to yield (S,E)-2-aminodec-4-enoic acid. The Hybrid PKS-NRPS synthetase poxE then performs condensation between the octaketide product of its PKS modules and the amino group of (S,E)-2-aminodec-4-enoic acid which is activated and incorporated by the adenylation domain. The resulting aminoacyl product can be cyclized by the Diels-Alderase PoxQ and reductively released by the reductive (R) domain of poxE to yield an aldehyde intermediate. The released aldehyde is then substrate for a Knoevenagel condensation by the hydrolyase poxO followed by an oxidation at the 5-position of the pyrrolidone ring. The presence of the olefin from the amino acid building block allows for migration of the substituted allyl group to occur. This allylic transposition reaction takes place in a conjugate addition, semipinacol-like fashion to yield a succinimide intermediate. Iterative two-electron oxidations of the C7 methyl of the succinimide intermediate to the carboxylic acid can be catalyzed by one of two remaining cytochrome P450 monooxygenasess poxC or poxD to yield oxaleimide A. Subsequent oxidation yields the maleimide scaffold oxaleimide I. Both oxaleimide A and oxaleimide I can undergo oxidative modifications in the decalin ring to yield the series of products oxaleimides B to H. This chain is Aminotransferase poxL, found in Penicillium oxalicum (strain 114-2 / CGMCC 5302) (Penicillium decumbens).